A 221-amino-acid polypeptide reads, in one-letter code: GTP cyclohydrolase III (221 aa).

This sequence belongs to the archaeal-type GTP cyclohydrolase family.

The enzyme catalyses GTP + 3 H2O = 2-amino-5-formylamino-6-(5-phospho-D-ribosylamino)pyrimidin-4(3H)-one + 2 phosphate + 2 H(+). Its function is as follows. Catalyzes the formation of 2-amino-5-formylamino-6-ribofuranosylamino-4(3H)-pyrimidinone ribonucleotide monophosphate and inorganic phosphate from GTP. Also has an independent pyrophosphate phosphohydrolase activity. The chain is GTP cyclohydrolase III from Pyrobaculum calidifontis (strain DSM 21063 / JCM 11548 / VA1).